Reading from the N-terminus, the 210-residue chain is Thymidylate kinase (210 aa).

10–17 is a binding site for ATP; the sequence is GIDGCGKT.

Belongs to the thymidylate kinase family.

It catalyses the reaction dTMP + ATP = dTDP + ADP. Functionally, phosphorylation of dTMP to form dTDP in both de novo and salvage pathways of dTTP synthesis. In Prochlorococcus marinus (strain MIT 9515), this protein is Thymidylate kinase.